Here is a 303-residue protein sequence, read N- to C-terminus: Sulfotransferase 6B1 (303 aa).

65–70 serves as a coordination point for 3'-phosphoadenylyl sulfate; the sequence is KCGSNW. The active-site Proton acceptor is the His118. Residues Arg140, Ser148, Tyr203, 237-242, and 259-261 each bind 3'-phosphoadenylyl sulfate; these read STFQAM and RKG.

The protein belongs to the sulfotransferase 1 family.

It localises to the cytoplasm. It is found in the cytosol. The enzyme catalyses thyroxine + 3'-phosphoadenylyl sulfate = thyroxine sulfate + adenosine 3',5'-bisphosphate + H(+). Sulfotransferase that utilizes 3'-phospho-5'-adenylyl sulfate (PAPS) as sulfonate donor to catalyze the sulfate conjugation of thyroxine. Involved in the metabolism of thyroxine. The chain is Sulfotransferase 6B1 (SULT6B1) from Pan troglodytes (Chimpanzee).